Consider the following 185-residue polypeptide: MIEVGDLKKGMFIIYDGEIYRVLEASKHFMGRGSGLIRTKLKNVKTGFVREVNFPSGEKVQEAELSFRKAQYLYRDGDHYYFMTLDDYEQYALSEEEIGDAKYYLVENMEVDLVFHEGTPIGIELPTTVELTVVETEPSFKGDTVSGGGKPAVLETGLKITVPYFIEVGDKIKVDTRTGEYVGRA.

This sequence belongs to the elongation factor P family.

It is found in the cytoplasm. The protein operates within protein biosynthesis; polypeptide chain elongation. Functionally, involved in peptide bond synthesis. Stimulates efficient translation and peptide-bond synthesis on native or reconstituted 70S ribosomes in vitro. Probably functions indirectly by altering the affinity of the ribosome for aminoacyl-tRNA, thus increasing their reactivity as acceptors for peptidyl transferase. This Thermotoga maritima (strain ATCC 43589 / DSM 3109 / JCM 10099 / NBRC 100826 / MSB8) protein is Elongation factor P (efp).